Here is a 107-residue protein sequence, read N- to C-terminus: NADH-quinone oxidoreductase subunit K (107 aa).

The next 3 helical transmembrane spans lie at 9–29, 36–56, and 68–88; these read IGVNHFLTISVILFGLGMFAV, IVILMGVELILNAANINFLTF, and FSLFVIVLAAAEAAIALAIVI.

The protein belongs to the complex I subunit 4L family. As to quaternary structure, NDH-1 is composed of 14 different subunits. Subunits NuoA, H, J, K, L, M, N constitute the membrane sector of the complex.

It is found in the cell inner membrane. The enzyme catalyses a quinone + NADH + 5 H(+)(in) = a quinol + NAD(+) + 4 H(+)(out). NDH-1 shuttles electrons from NADH, via FMN and iron-sulfur (Fe-S) centers, to quinones in the respiratory chain. The immediate electron acceptor for the enzyme in this species is believed to be a menaquinone. Couples the redox reaction to proton translocation (for every two electrons transferred, four hydrogen ions are translocated across the cytoplasmic membrane), and thus conserves the redox energy in a proton gradient. The chain is NADH-quinone oxidoreductase subunit K from Chlorobaculum tepidum (strain ATCC 49652 / DSM 12025 / NBRC 103806 / TLS) (Chlorobium tepidum).